The following is a 662-amino-acid chain: Fusion glycoprotein F0 (662 aa).

The disordered stretch occupies residues 1–73; it reads MHRGIPKSSK…TRSRKQTSHR (73 aa). An N-terminal signal peptide occupies residues 1-135; it reads MHRGIPKSSK…MASLFLCSKA (135 aa). A compositionally biased stretch (polar residues) spans 8 to 19; the sequence is SSKTQTHTQQDR. A compositionally biased stretch (basic residues) spans 64-73; that stretch reads TRSRKQTSHR. Topologically, residues 136–608 are extracellular; the sequence is QIHWDNLSTI…VRRSSFNFGS (473 aa). Residues Asn141, Asn173, and Asn179 are each glycosylated (N-linked (GlcNAc...) asparagine; by host). The interval 225 to 249 is fusion peptide; it reads FAGVVLAGVALGVATAAQITAGIAL. The stretch at 250–278 forms a coiled coil; that stretch reads HQSNLNAQAIQSLRTSLEQSNKAIEEIRE. Cystine bridges form between Cys446/Cys455, Cys470/Cys478, Cys502/Cys507, and Cys509/Cys532. Positions 574–599 form a coiled coil; it reads NLGNALKKLDDAKVLIDSSNQILETV. The chain crosses the membrane as a helical span at residues 609 to 629; it reads LLSVPILSCTALALLLLIYCC. The Cytoplasmic portion of the chain corresponds to 630-662; sequence KRRYQQTLKQHTKVDPAFKPDLTGTSKSYVRSL.

This sequence belongs to the paramyxoviruses fusion glycoprotein family. In terms of assembly, homotrimer of disulfide-linked F1-F2. Post-translationally, the inactive precursor F0 is glycosylated and proteolytically cleaved into F1 and F2 to be functionally active. The cleavage is mediated by cellular proteases during the transport and maturation of the polypeptide.

Its subcellular location is the virion membrane. The protein localises to the host cell membrane. Functionally, class I viral fusion protein. Under the current model, the protein has at least 3 conformational states: pre-fusion native state, pre-hairpin intermediate state, and post-fusion hairpin state. During viral and plasma cell membrane fusion, the heptad repeat (HR) regions assume a trimer-of-hairpins structure, positioning the fusion peptide in close proximity to the C-terminal region of the ectodomain. The formation of this structure appears to drive apposition and subsequent fusion of viral and plasma cell membranes. Directs fusion of viral and cellular membranes leading to delivery of the nucleocapsid into the cytoplasm. This fusion is pH independent and occurs directly at the outer cell membrane. The trimer of F1-F2 (F protein) probably interacts with H at the virion surface. Upon HN binding to its cellular receptor, the hydrophobic fusion peptide is unmasked and interacts with the cellular membrane, inducing the fusion between cell and virion membranes. Later in infection, F proteins expressed at the plasma membrane of infected cells could mediate fusion with adjacent cells to form syncytia, a cytopathic effect that could lead to tissue necrosis. This is Fusion glycoprotein F0 (F) from Canine distemper virus (strain Onderstepoort) (CDV).